We begin with the raw amino-acid sequence, 414 residues long: 2,3-diketo-5-methylthiopentyl-1-phosphate enolase (414 aa).

Lys-99 functions as the Proton acceptor in the catalytic mechanism. Substrate is bound by residues Lys-148, 174 to 177 (KDDE), His-265, Gly-338, and 360 to 361 (GG). Residues Lys-174, Asp-176, and Glu-177 each contribute to the Mg(2+) site. Lys-174 carries the N6-carboxylysine modification.

The protein belongs to the RuBisCO large chain family. Type IV subfamily. Homodimer. Requires Mg(2+) as cofactor.

The catalysed reaction is 5-methylsulfanyl-2,3-dioxopentyl phosphate = 2-hydroxy-5-methylsulfanyl-3-oxopent-1-enyl phosphate. It functions in the pathway amino-acid biosynthesis; L-methionine biosynthesis via salvage pathway; L-methionine from S-methyl-5-thio-alpha-D-ribose 1-phosphate: step 3/6. Catalyzes the enolization of 2,3-diketo-5-methylthiopentyl-1-phosphate (DK-MTP-1-P) into 2-hydroxy-3-keto-5-methylthiopentenyl-1-phosphate (HK-MTPenyl-1-P). The chain is 2,3-diketo-5-methylthiopentyl-1-phosphate enolase from Bacillus cytotoxicus (strain DSM 22905 / CIP 110041 / 391-98 / NVH 391-98).